We begin with the raw amino-acid sequence, 68 residues long: UPF0435 protein Sca_1453 (68 aa).

It belongs to the UPF0435 family.

This is UPF0435 protein Sca_1453 from Staphylococcus carnosus (strain TM300).